Here is a 106-residue protein sequence, read N- to C-terminus: Putative regulatory protein MalR (106 aa).

In terms of domain architecture, HTH hxlR-type spans 12–106 (CSIEYTLSFM…NLMHKWGQEN (95 aa)).

Functionally, potential regulator of the malBH genes. This is Putative regulatory protein MalR (malR) from Fusobacterium mortiferum.